Reading from the N-terminus, the 118-residue chain is Large ribosomal subunit protein bL20 (118 aa).

Belongs to the bacterial ribosomal protein bL20 family.

In terms of biological role, binds directly to 23S ribosomal RNA and is necessary for the in vitro assembly process of the 50S ribosomal subunit. It is not involved in the protein synthesizing functions of that subunit. This Staphylococcus carnosus (strain TM300) protein is Large ribosomal subunit protein bL20.